Consider the following 278-residue polypeptide: Probable endonuclease 4 (278 aa).

Residues H69, H109, E145, D179, H182, H214, D227, H229, and E259 each coordinate Zn(2+).

The protein belongs to the AP endonuclease 2 family. Zn(2+) is required as a cofactor.

It carries out the reaction Endonucleolytic cleavage to 5'-phosphooligonucleotide end-products.. Functionally, endonuclease IV plays a role in DNA repair. It cleaves phosphodiester bonds at apurinic or apyrimidinic (AP) sites, generating a 3'-hydroxyl group and a 5'-terminal sugar phosphate. The polypeptide is Probable endonuclease 4 (Phocaeicola vulgatus (strain ATCC 8482 / DSM 1447 / JCM 5826 / CCUG 4940 / NBRC 14291 / NCTC 11154) (Bacteroides vulgatus)).